A 655-amino-acid chain; its full sequence is Probable alpha-galactosidase D (655 aa).

An N-terminal signal peptide occupies residues methionine 1–alanine 16. N-linked (GlcNAc...) asparagine glycans are attached at residues asparagine 87 and asparagine 93. Cysteine 126 and cysteine 153 form a disulfide bridge. Aspartate 151 serves as the catalytic Nucleophile. Glutamate 196–aspartate 200 is a binding site for substrate. The Proton donor role is filled by aspartate 218. Asparagine 432, asparagine 482, asparagine 502, asparagine 540, and asparagine 579 each carry an N-linked (GlcNAc...) asparagine glycan.

This sequence belongs to the glycosyl hydrolase 27 family.

It localises to the secreted. It catalyses the reaction Hydrolysis of terminal, non-reducing alpha-D-galactose residues in alpha-D-galactosides, including galactose oligosaccharides, galactomannans and galactolipids.. In terms of biological role, hydrolyzes a variety of simple alpha-D-galactoside as well as more complex molecules such as oligosaccharides and polysaccharides. The polypeptide is Probable alpha-galactosidase D (aglD) (Aspergillus terreus (strain NIH 2624 / FGSC A1156)).